The sequence spans 87 residues: Phosphoribosyl-ATP pyrophosphatase (87 aa).

Belongs to the PRA-PH family.

It localises to the cytoplasm. It catalyses the reaction 1-(5-phospho-beta-D-ribosyl)-ATP + H2O = 1-(5-phospho-beta-D-ribosyl)-5'-AMP + diphosphate + H(+). Its pathway is amino-acid biosynthesis; L-histidine biosynthesis; L-histidine from 5-phospho-alpha-D-ribose 1-diphosphate: step 2/9. In Nocardia farcinica (strain IFM 10152), this protein is Phosphoribosyl-ATP pyrophosphatase.